The chain runs to 83 residues: ATP synthase subunit c, chloroplastic (83 aa).

The next 2 helical transmembrane spans lie at 3–23 (PIIS…AAIG) and 57–77 (LAFM…LLFA).

This sequence belongs to the ATPase C chain family. In terms of assembly, F-type ATPases have 2 components, F(1) - the catalytic core - and F(0) - the membrane proton channel. F(1) has five subunits: alpha(3), beta(3), gamma(1), delta(1), epsilon(1). F(0) has four main subunits: a(1), b(1), b'(1) and c(10-14). The alpha and beta chains form an alternating ring which encloses part of the gamma chain. F(1) is attached to F(0) by a central stalk formed by the gamma and epsilon chains, while a peripheral stalk is formed by the delta, b and b' chains.

It is found in the plastid. Its subcellular location is the chloroplast thylakoid membrane. F(1)F(0) ATP synthase produces ATP from ADP in the presence of a proton or sodium gradient. F-type ATPases consist of two structural domains, F(1) containing the extramembraneous catalytic core and F(0) containing the membrane proton channel, linked together by a central stalk and a peripheral stalk. During catalysis, ATP synthesis in the catalytic domain of F(1) is coupled via a rotary mechanism of the central stalk subunits to proton translocation. Functionally, key component of the F(0) channel; it plays a direct role in translocation across the membrane. A homomeric c-ring of between 10-14 subunits forms the central stalk rotor element with the F(1) delta and epsilon subunits. This Diacronema lutheri (Unicellular marine alga) protein is ATP synthase subunit c, chloroplastic.